The following is a 245-amino-acid chain: Adenosylcobinamide-GDP ribazoletransferase (245 aa).

5 consecutive transmembrane segments (helical) span residues 31 to 51 (FGRAVLCYPLVGVLIGVVLYA), 61 to 81 (PLLQAALLLSLWVALSGALHL), 113 to 133 (VAVVVLVLVLLLKFSALAALL), 138 to 158 (AGLLPLAPWLARSSLPLLFLT), and 192 to 212 (LAFGLAGLLALLVTLMLFAWL).

Belongs to the CobS family. Mg(2+) is required as a cofactor.

Its subcellular location is the cell inner membrane. It carries out the reaction alpha-ribazole + adenosylcob(III)inamide-GDP = adenosylcob(III)alamin + GMP + H(+). It catalyses the reaction alpha-ribazole 5'-phosphate + adenosylcob(III)inamide-GDP = adenosylcob(III)alamin 5'-phosphate + GMP + H(+). The protein operates within cofactor biosynthesis; adenosylcobalamin biosynthesis; adenosylcobalamin from cob(II)yrinate a,c-diamide: step 7/7. Its function is as follows. Joins adenosylcobinamide-GDP and alpha-ribazole to generate adenosylcobalamin (Ado-cobalamin). Also synthesizes adenosylcobalamin 5'-phosphate from adenosylcobinamide-GDP and alpha-ribazole 5'-phosphate. This chain is Adenosylcobinamide-GDP ribazoletransferase, found in Pseudomonas aeruginosa (strain ATCC 15692 / DSM 22644 / CIP 104116 / JCM 14847 / LMG 12228 / 1C / PRS 101 / PAO1).